The chain runs to 511 residues: MAVGQAKAAMGKISSAIGERSKRISGAMNEPRRKRKILLVIVCIAMLLDNMLYMVIVPIIPNYLETIRTYKLVYITTPSNGTNGSLLNSTQRAVLERNPNANEDIQIGVLFASKAILQLLSNPFTGTFIDRVGYDIPLLIGLTIMFFSTITFAFGESYAILFAARSLQGLGSAFADTSGIAMIADKYTEESERTQALGIALAFISFGSLVAPPFGGVLYQFAGKWVPFLVLSFVCLLDGILLLMVVTPFASRTRVNTLQGTPIYKLMIDPYIAVVAGALTTCNIPLAFLEPTISNWMKKTMNASEWQMGITWLPAFFPHILGVYITVKLAAKYPNYQWLYGAVGLVIIGASSCTIPACRNFEELIIPLCALCFGIALVDTALLPTLAFLVDIRYVSVYGSVYAIADISYSVAYALGPIMAGQIVHDLGFVQLNLGMGLVNILYAPGLLFLRNVCQMKPSLSERNILLEEGPKGLYDTIIMEERKEAKEPHGTSSGNHSVHAVLSDQEGYSE.

At 1–36 (MAVGQAKAAMGKISSAIGERSKRISGAMNEPRRKRK) the chain is on the cytoplasmic side. Residues 37-57 (ILLVIVCIAMLLDNMLYMVIV) form a helical membrane-spanning segment. Residues 58 to 108 (PIIPNYLETIRTYKLVYITTPSNGTNGSLLNSTQRAVLERNPNANEDIQIG) lie on the Lumenal, vesicle side of the membrane. Residues N80, N83, and N88 are each glycosylated (N-linked (GlcNAc...) asparagine). The helical transmembrane segment at 109-129 (VLFASKAILQLLSNPFTGTFI) threads the bilayer. Topologically, residues 130 to 135 (DRVGYD) are cytoplasmic. Residues 136-156 (IPLLIGLTIMFFSTITFAFGE) form a helical membrane-spanning segment. Over 157 to 165 (SYAILFAAR) the chain is Lumenal, vesicle. The helical transmembrane segment at 166-186 (SLQGLGSAFADTSGIAMIADK) threads the bilayer. Topologically, residues 187–197 (YTEESERTQAL) are cytoplasmic. The chain crosses the membrane as a helical span at residues 198 to 218 (GIALAFISFGSLVAPPFGGVL). The Lumenal, vesicle segment spans residues 219–225 (YQFAGKW). Residues 226–246 (VPFLVLSFVCLLDGILLLMVV) form a helical membrane-spanning segment. Residues 247-267 (TPFASRTRVNTLQGTPIYKLM) lie on the Cytoplasmic side of the membrane. The helical transmembrane segment at 268-288 (IDPYIAVVAGALTTCNIPLAF) threads the bilayer. The Lumenal, vesicle portion of the chain corresponds to 289–306 (LEPTISNWMKKTMNASEW). N-linked (GlcNAc...) asparagine glycosylation is present at N302. A helical membrane pass occupies residues 307–327 (QMGITWLPAFFPHILGVYITV). The Cytoplasmic portion of the chain corresponds to 328-337 (KLAAKYPNYQ). Residues 338–358 (WLYGAVGLVIIGASSCTIPAC) traverse the membrane as a helical segment. Residues 359–363 (RNFEE) are Lumenal, vesicle-facing. The chain crosses the membrane as a helical span at residues 364 to 384 (LIIPLCALCFGIALVDTALLP). The Cytoplasmic segment spans residues 385–400 (TLAFLVDIRYVSVYGS). The chain crosses the membrane as a helical span at residues 401-421 (VYAIADISYSVAYALGPIMAG). Residues 422 to 428 (QIVHDLG) are Lumenal, vesicle-facing. A helical transmembrane segment spans residues 429-449 (FVQLNLGMGLVNILYAPGLLF). Residues 450 to 511 (LRNVCQMKPS…VLSDQEGYSE (62 aa)) lie on the Cytoplasmic side of the membrane. A disordered region spans residues 485–511 (EAKEPHGTSSGNHSVHAVLSDQEGYSE).

This sequence belongs to the major facilitator superfamily. Vesicular transporter family. In terms of tissue distribution, high expression in the electric lobe of the brain.

It is found in the membrane. Involved in acetylcholine transport into synaptic vesicles. The chain is Vesicular acetylcholine transporter from Torpedo marmorata (Marbled electric ray).